The chain runs to 267 residues: Methylglyoxal reductase DkgB (267 aa).

The active-site Proton donor is Y39. Position 97 (H97) interacts with substrate. 179–231 contacts NADP(+); sequence MTLAYGKALKDEVIARIAAKHNATPAQVILAWAMGEGYSVIPSSTRRENLASS.

This sequence belongs to the aldo/keto reductase family. In terms of assembly, monomer.

The protein resides in the cytoplasm. It catalyses the reaction hydroxyacetone + NADP(+) = methylglyoxal + NADPH + H(+). Aldo-keto reductase that significantly contributes to cellular methylglyoxal detoxification by catalyzing the NADPH-dependent conversion of methylglyoxal to acetol. In Salmonella typhimurium (strain LT2 / SGSC1412 / ATCC 700720), this protein is Methylglyoxal reductase DkgB.